Consider the following 481-residue polypeptide: Polygalacturonase QRT3 (481 aa).

The first 27 residues, 1-27 (MELRKSQVAMPVFLAIMSLMVSQVVFA), serve as a signal peptide directing secretion. PbH1 repeat units lie at residues 203–226 (SLRT…LVKS), 261–282 (GNDN…MVSG), and 356–377 (IRGV…QIVQ). Residues Asn-415 and Asn-455 are each glycosylated (N-linked (GlcNAc...) asparagine).

This sequence belongs to the glycosyl hydrolase 28 family. As to expression, expressed in the tapetum cells in the anthers and in the ovules of open flowers.

It localises to the secreted. It is found in the cell wall. The catalysed reaction is (1,4-alpha-D-galacturonosyl)n+m + H2O = (1,4-alpha-D-galacturonosyl)n + (1,4-alpha-D-galacturonosyl)m.. Polygalacturonase required for degrading the pollen mother cell wall during microspore development. This Arabidopsis thaliana (Mouse-ear cress) protein is Polygalacturonase QRT3 (QRT3).